The following is a 1325-amino-acid chain: Cellulose synthase 1 operon protein C (1325 aa).

A signal peptide spans 1 to 30 (MNRRYVFSLSAGLLASSCMGAIMPVPVARA). TPR repeat units lie at residues 50 to 83 (RQIL…APDA), 85 to 117 (DVLE…APGS), 292 to 325 (AGLA…NSHD), 326 to 359 (ADSL…DPKT), 406 to 439 (TGAT…DPNN), 558 to 591 (NDAA…KEDL), 702 to 735 (MGIA…DPEA), and 737 to 769 (SPKL…NPQD). Residues 838–886 (VEGSRSASGPAATEEDALAPPSSNPFRHHGYGRQTELGAPVTGGSYSME) form a disordered region.

This sequence belongs to the AcsC/BcsC family.

It is found in the cell outer membrane. It functions in the pathway glycan metabolism; bacterial cellulose biosynthesis. Required for maximal bacterial cellulose synthesis. It may be involved in the formation of a membrane complex for extrusion of the cellulose product. The sequence is that of Cellulose synthase 1 operon protein C (bcsCI) from Komagataeibacter xylinus (Gluconacetobacter xylinus).